A 140-amino-acid chain; its full sequence is uncharacterized protein (140 aa).

This sequence belongs to the MG439/MG440 family.

This is an uncharacterized protein from Mycoplasma pneumoniae (strain ATCC 29342 / M129 / Subtype 1) (Mycoplasmoides pneumoniae).